A 431-amino-acid chain; its full sequence is 3-phosphoshikimate 1-carboxyvinyltransferase (431 aa).

Residues lysine 21, serine 22, and arginine 26 each coordinate 3-phosphoshikimate. Lysine 21 serves as a coordination point for phosphoenolpyruvate. Residues glycine 93 and arginine 121 each coordinate phosphoenolpyruvate. Residues serine 166, glutamine 168, aspartate 318, and lysine 345 each coordinate 3-phosphoshikimate. Residue glutamine 168 coordinates phosphoenolpyruvate. Aspartate 318 serves as the catalytic Proton acceptor. Positions 349 and 391 each coordinate phosphoenolpyruvate.

The protein belongs to the EPSP synthase family. As to quaternary structure, monomer.

The protein resides in the cytoplasm. The enzyme catalyses 3-phosphoshikimate + phosphoenolpyruvate = 5-O-(1-carboxyvinyl)-3-phosphoshikimate + phosphate. The protein operates within metabolic intermediate biosynthesis; chorismate biosynthesis; chorismate from D-erythrose 4-phosphate and phosphoenolpyruvate: step 6/7. In terms of biological role, catalyzes the transfer of the enolpyruvyl moiety of phosphoenolpyruvate (PEP) to the 5-hydroxyl of shikimate-3-phosphate (S3P) to produce enolpyruvyl shikimate-3-phosphate and inorganic phosphate. This chain is 3-phosphoshikimate 1-carboxyvinyltransferase, found in Sulfurihydrogenibium sp. (strain YO3AOP1).